The sequence spans 474 residues: tRNA-2-methylthio-N(6)-dimethylallyladenosine synthase (474 aa).

The MTTase N-terminal domain occupies 3 to 120; that stretch reads KKLHIKTWGC…LPDMIEQVRR (118 aa). [4Fe-4S] cluster-binding residues include cysteine 12, cysteine 49, cysteine 83, cysteine 157, cysteine 161, and cysteine 164. One can recognise a Radical SAM core domain in the interval 143–375; the sequence is RAEGPTAFVS…QDRITQQAMR (233 aa). Positions 378–441 constitute a TRAM domain; that stretch reads RHMMGTVQRI…TNSLRGKFIR (64 aa).

Belongs to the methylthiotransferase family. MiaB subfamily. Monomer. [4Fe-4S] cluster serves as cofactor.

It localises to the cytoplasm. It carries out the reaction N(6)-dimethylallyladenosine(37) in tRNA + (sulfur carrier)-SH + AH2 + 2 S-adenosyl-L-methionine = 2-methylsulfanyl-N(6)-dimethylallyladenosine(37) in tRNA + (sulfur carrier)-H + 5'-deoxyadenosine + L-methionine + A + S-adenosyl-L-homocysteine + 2 H(+). Functionally, catalyzes the methylthiolation of N6-(dimethylallyl)adenosine (i(6)A), leading to the formation of 2-methylthio-N6-(dimethylallyl)adenosine (ms(2)i(6)A) at position 37 in tRNAs that read codons beginning with uridine. In Shewanella sp. (strain W3-18-1), this protein is tRNA-2-methylthio-N(6)-dimethylallyladenosine synthase.